A 116-amino-acid chain; its full sequence is Hydrogenase maturation factor HypA (116 aa).

Position 2 (H2) interacts with Ni(2+). Residues C73, C76, C90, and C93 each contribute to the Zn(2+) site.

This sequence belongs to the HypA/HybF family.

Its function is as follows. Involved in the maturation of [NiFe] hydrogenases. Required for nickel insertion into the metal center of the hydrogenase. The sequence is that of Hydrogenase maturation factor HypA from Escherichia coli O157:H7.